The following is a 470-amino-acid chain: tRNA(Ile)-lysidine synthase (470 aa).

32-37 (SGGVDS) is an ATP binding site.

Belongs to the tRNA(Ile)-lysidine synthase family.

The protein localises to the cytoplasm. It catalyses the reaction cytidine(34) in tRNA(Ile2) + L-lysine + ATP = lysidine(34) in tRNA(Ile2) + AMP + diphosphate + H(+). Functionally, ligates lysine onto the cytidine present at position 34 of the AUA codon-specific tRNA(Ile) that contains the anticodon CAU, in an ATP-dependent manner. Cytidine is converted to lysidine, thus changing the amino acid specificity of the tRNA from methionine to isoleucine. This chain is tRNA(Ile)-lysidine synthase, found in Shewanella woodyi (strain ATCC 51908 / MS32).